Reading from the N-terminus, the 207-residue chain is Methylated-DNA--protein-cysteine methyltransferase (207 aa).

DNA-binding residues include Tyr123 and Arg137. Catalysis depends on Cys154, which acts as the Nucleophile; methyl group acceptor. Ser160 is a binding site for DNA.

This sequence belongs to the MGMT family.

The protein localises to the nucleus. The catalysed reaction is a 6-O-methyl-2'-deoxyguanosine in DNA + L-cysteinyl-[protein] = S-methyl-L-cysteinyl-[protein] + a 2'-deoxyguanosine in DNA. It carries out the reaction a 4-O-methyl-thymidine in DNA + L-cysteinyl-[protein] = a thymidine in DNA + S-methyl-L-cysteinyl-[protein]. Functionally, involved in the cellular defense against the biological effects of O6-methylguanine (O6-MeG) and O4-methylthymine (O4-MeT) in DNA. Repairs the methylated nucleobase in DNA by stoichiometrically transferring the methyl group to a cysteine residue in the enzyme. This is a suicide reaction: the enzyme is irreversibly inactivated. The protein is Methylated-DNA--protein-cysteine methyltransferase (MGT1) of Candida glabrata (strain ATCC 2001 / BCRC 20586 / JCM 3761 / NBRC 0622 / NRRL Y-65 / CBS 138) (Yeast).